Consider the following 450-residue polypeptide: MSRKYFGTDGVRGKVGTFPITPDFAMRLGWAAGTVLASTGTKEVLIGKDTRISGYMLESAMEAGFSAAGVNVALIGPMPTPAVAYLASTFRADAGVVISASHNPFYDNGIKFFSNTGTKLNDAQELEIEALLEQALEHNALQCVASEKLGKVRRIDDAAGRYIEFCKGTFPNHLSLAGLKIVVDSAHGAAYHIAPNVYRELGAEVISINDKPNGVNINDHCGATHLDSLQSAVMIHEADLGIALDGDADRVMFVDHNGHVVDGDEILFILAQAAYQKGEMQGGVVGTLMSNLGLELALKGMDIPFVRAKVGDRYVVEQLKETGWQLGGEGSGHILSLKHASTGDGIVASLQVLKAVLESGKRLAELKAEMTKLPQVLINVRLTSGCADSILSKDSVKQAVIAAEEVLGNQGRVLLRKSGTEPLIRVMVESTDISLTQQQAEYIAQAVKVA.

Ser-101 serves as the catalytic Phosphoserine intermediate. The Mg(2+) site is built by Ser-101, Asp-245, Asp-247, and Asp-249. At Ser-101 the chain carries Phosphoserine.

The protein belongs to the phosphohexose mutase family. Requires Mg(2+) as cofactor. In terms of processing, activated by phosphorylation.

It carries out the reaction alpha-D-glucosamine 1-phosphate = D-glucosamine 6-phosphate. Catalyzes the conversion of glucosamine-6-phosphate to glucosamine-1-phosphate. The polypeptide is Phosphoglucosamine mutase 2 (Shewanella sp. (strain MR-4)).